Here is an 819-residue protein sequence, read N- to C-terminus: Leucine--tRNA ligase (819 aa).

The 'HIGH' region signature appears at P42–H52. Residues K576–S580 carry the 'KMSKS' region motif. K579 contributes to the ATP binding site.

This sequence belongs to the class-I aminoacyl-tRNA synthetase family.

Its subcellular location is the cytoplasm. It catalyses the reaction tRNA(Leu) + L-leucine + ATP = L-leucyl-tRNA(Leu) + AMP + diphosphate. The chain is Leucine--tRNA ligase from Nitrosococcus oceani (strain ATCC 19707 / BCRC 17464 / JCM 30415 / NCIMB 11848 / C-107).